Reading from the N-terminus, the 331-residue chain is Ribosomal RNA small subunit methyltransferase H (331 aa).

S-adenosyl-L-methionine is bound by residues 48 to 50 (GGH), Asp-67, Asp-115, and Gln-122. A disordered region spans residues 297 to 331 (RGTEKPTEEEISENRRASSAKVRAVEKIRTSRTTA). The span at 298–312 (GTEKPTEEEISENRR) shows a compositional bias: basic and acidic residues.

Belongs to the methyltransferase superfamily. RsmH family.

The protein resides in the cytoplasm. The catalysed reaction is cytidine(1402) in 16S rRNA + S-adenosyl-L-methionine = N(4)-methylcytidine(1402) in 16S rRNA + S-adenosyl-L-homocysteine + H(+). Specifically methylates the N4 position of cytidine in position 1402 (C1402) of 16S rRNA. This chain is Ribosomal RNA small subunit methyltransferase H, found in Micrococcus luteus (strain ATCC 4698 / DSM 20030 / JCM 1464 / CCM 169 / CCUG 5858 / IAM 1056 / NBRC 3333 / NCIMB 9278 / NCTC 2665 / VKM Ac-2230) (Micrococcus lysodeikticus).